A 541-amino-acid chain; its full sequence is Peptidyl-prolyl isomerase cwc-27 (541 aa).

The region spanning 11–193 is the PPIase cyclophilin-type domain; sequence PTASAIIHTT…YPIKITRIEI (183 aa). 2 disordered regions span residues 199–443 and 513–541; these read DDMQ…GQAD and TLKE…RDRH. Composition is skewed to basic and acidic residues over residues 279–307, 316–348, and 361–374; these read AKRD…ESRR, QKKE…KTNE, and IHSE…KKSA. Acidic residues predominate over residues 432 to 442; that stretch reads DVEDGEQDGQA. Composition is skewed to basic and acidic residues over residues 513 to 525 and 532 to 541; these read TLKE…RDAK and AWDRGRRDRH.

The protein belongs to the cyclophilin-type PPIase family. CWC27 subfamily. Associated with the spliceosome.

It localises to the cytoplasm. The protein resides in the nucleus. It catalyses the reaction [protein]-peptidylproline (omega=180) = [protein]-peptidylproline (omega=0). Functionally, PPIases accelerate the folding of proteins. It catalyzes the cis-trans isomerization of proline imidic peptide bonds in oligopeptides. Involved in pre-mRNA splicing. The sequence is that of Peptidyl-prolyl isomerase cwc-27 (cwc-27) from Neurospora crassa (strain ATCC 24698 / 74-OR23-1A / CBS 708.71 / DSM 1257 / FGSC 987).